Here is a 478-residue protein sequence, read N- to C-terminus: MSQKFDVVVIGAGPGGYVAAIRAAQLGLKTACIEKYIGKEGKVALGGTCLNVGCIPSKALLDSSYKYHEAKEAFKVHGIEAKGVTIDVPAMVARKANIVKNLTGGIATLFKANGVTSFEGHGKLLANKQVEVTGLDGKTQVLEAENVIIASGSRPVEIPPAPLTDDIIVDSTGALEFQAVPKKLGVIGAGVIGLELGSVWARLGAEVTVLEALDKFLPAADEQIAKEALKVLTKQGLNIRLGARVTASEVKKKQVTVTFTDANGEQKETFDKLIVAVGRRPVTTDLLAADSGVTLDERGFIYVDDHCKTSVPGVFAIGDVVRGAMLAHKASEEGVMVAERIAGHKAQMNYDLIPSVIYTHPEIAWVGKTEQTLKAEGVEVNVGTFPFAASGRAMAANDTTGLVKVIADAKTDRVLGVHVIGPSAAELVQQGAIGMEFGTSAEDLGMMVFSHPTLSEALHEAALAVNGHAIHIANRKKR.

FAD contacts are provided by residues 34–49, lysine 58, and glycine 122; that span reads EKYIGKEGKVALGGTC. A disulfide bridge links cysteine 49 with cysteine 54. NAD(+)-binding positions include 188–192, glutamate 211, valine 245, and 276–279; these read GAGVI and AVGR. Residues aspartate 319 and alanine 327 each contribute to the FAD site. Histidine 451 (proton acceptor) is an active-site residue.

Belongs to the class-I pyridine nucleotide-disulfide oxidoreductase family. In terms of assembly, homodimer. The cofactor is FAD.

Its subcellular location is the cytoplasm. It carries out the reaction N(6)-[(R)-dihydrolipoyl]-L-lysyl-[protein] + NAD(+) = N(6)-[(R)-lipoyl]-L-lysyl-[protein] + NADH + H(+). Its function is as follows. The branched-chain alpha-keto dehydrogenase complex catalyzes the overall conversion of alpha-keto acids to acyl-CoA and CO(2). It contains multiple copies of 3 enzymatic components: branched-chain alpha-keto acid decarboxylase (E1), lipoamide acyltransferase (E2) and lipoamide dehydrogenase (E3). Also acts in the glycine cleavage system. The protein is Dihydrolipoyl dehydrogenase (lpdG) of Pseudomonas aeruginosa (strain ATCC 15692 / DSM 22644 / CIP 104116 / JCM 14847 / LMG 12228 / 1C / PRS 101 / PAO1).